The chain runs to 513 residues: Na(+)/H(+) antiporter NhaB (513 aa).

A run of 12 helical transmembrane segments spans residues 23-43 (LALI…PFVA), 52-72 (IFTL…LLAI), 97-117 (LLLM…LFIF), 120-140 (LLLS…AAAF), 144-164 (FLDA…FYGI), 202-222 (LMMH…VGEP), 238-258 (FFLR…LTCL), 303-323 (AIIG…VGLI), 348-368 (TESL…AVII), 391-411 (LFYI…VGTI), 447-467 (ATPN…APLI), and 475-495 (VWMA…CVEF).

This sequence belongs to the NhaB Na(+)/H(+) (TC 2.A.34) antiporter family.

Its subcellular location is the cell inner membrane. The catalysed reaction is 2 Na(+)(in) + 3 H(+)(out) = 2 Na(+)(out) + 3 H(+)(in). Na(+)/H(+) antiporter that extrudes sodium in exchange for external protons. The sequence is that of Na(+)/H(+) antiporter NhaB from Shigella sonnei (strain Ss046).